The sequence spans 165 residues: Phosphopantetheine adenylyltransferase (165 aa).

Thr9 provides a ligand contact to substrate. Residues 9–10 (TF) and His17 each bind ATP. Residues Lys41, Leu78, and Arg92 each contribute to the substrate site. Residues 93–95 (GLR), Glu103, and 128–134 (RQAIASK) contribute to the ATP site.

Belongs to the bacterial CoaD family. In terms of assembly, homohexamer. Mg(2+) is required as a cofactor.

It localises to the cytoplasm. The enzyme catalyses (R)-4'-phosphopantetheine + ATP + H(+) = 3'-dephospho-CoA + diphosphate. Its pathway is cofactor biosynthesis; coenzyme A biosynthesis; CoA from (R)-pantothenate: step 4/5. In terms of biological role, reversibly transfers an adenylyl group from ATP to 4'-phosphopantetheine, yielding dephospho-CoA (dPCoA) and pyrophosphate. The chain is Phosphopantetheine adenylyltransferase from Ruegeria pomeroyi (strain ATCC 700808 / DSM 15171 / DSS-3) (Silicibacter pomeroyi).